The chain runs to 396 residues: Proteasome-activating nucleotidase (396 aa).

The stretch at 16–57 (VTYLKRRIRQLELQVRMLEADKERLERELSRLRSEMSRLRQP) forms a coiled coil. ATP contacts are provided by residues 181 to 186 (GCGKTL) and His320. Residues 394–396 (IYG) form a docks into pockets in the proteasome alpha-ring to cause gate opening region.

The protein belongs to the AAA ATPase family. In terms of assembly, homohexamer. The hexameric complex has a two-ring architecture resembling a top hat that caps the 20S proteasome core at one or both ends. Upon ATP-binding, the C-terminus of PAN interacts with the alpha-rings of the proteasome core by binding to the intersubunit pockets.

The protein resides in the cytoplasm. In terms of biological role, ATPase which is responsible for recognizing, binding, unfolding and translocation of substrate proteins into the archaeal 20S proteasome core particle. Is essential for opening the gate of the 20S proteasome via an interaction with its C-terminus, thereby allowing substrate entry and access to the site of proteolysis. Thus, the C-termini of the proteasomal ATPase function like a 'key in a lock' to induce gate opening and therefore regulate proteolysis. Unfolding activity requires energy from ATP hydrolysis, whereas ATP binding alone promotes ATPase-20S proteasome association which triggers gate opening, and supports translocation of unfolded substrates. The protein is Proteasome-activating nucleotidase of Pyrococcus furiosus (strain ATCC 43587 / DSM 3638 / JCM 8422 / Vc1).